The following is a 1755-amino-acid chain: Transposon Ty1-OL Gag-Pol polyprotein (1755 aa).

Composition is skewed to polar residues over residues 1–23 (MESQ…SVTS), 48–60 (TKAN…TPAS), and 127–152 (QSQF…GNTF). Disordered stretches follow at residues 1 to 93 (MESQ…MMTQ), 126 to 173 (PQSQ…RPPP), and 352 to 421 (GSRN…SKST). Positions 153–165 (TDSSSADSDMTST) are enriched in low complexity. The RNA-binding stretch occupies residues 299-401 (NNGIHINNKV…NSKSKTARAH (103 aa)). Over residues 402–418 (NVSTSNNSPSTDNDSIS) the composition is skewed to low complexity. Position 416 is a phosphoserine (Ser416). The active-site For protease activity; shared with dimeric partner is Asp461. The segment at 583 to 640 (NVHTSESTRKYPYPFIHRMLAHANAQTIRYSLKNNTITYFNESDVDWSSAIDYQCPDC) is integrase-type zinc finger-like. Residues 660 to 835 (NSYEPFQYLH…AGLDISTLLP (176 aa)) enclose the Integrase catalytic domain. Asp671 and Asp736 together coordinate Mg(2+). 3 disordered regions span residues 956-1087 (SKAV…ETEK), 1092-1111 (RSPS…NIVP), and 1130-1171 (DLPL…DSNA). Residues 960-969 (SPTDSTPPST) are compositionally biased toward low complexity. The segment covering 1005–1015 (STPQISNIEST) has biased composition (polar residues). The segment covering 1038 to 1053 (ESSHASKSKDFRHSDS) has biased composition (basic and acidic residues). Polar residues-rich tracts occupy residues 1054 to 1082 (YSEN…QISD) and 1101 to 1111 (PENNSSHNIVP). Residues 1178 to 1212 (KKRSLEDNETEIKVSRDTWNTKNMRSLEPPRSKKR) carry the Bipartite nuclear localization signal motif. The region spanning 1338–1476 (NNYYITQLDI…DILGLEIKYQ (139 aa)) is the Reverse transcriptase Ty1/copia-type domain. Mg(2+) is bound by residues Asp1346, Asp1427, Asp1428, Asp1610, Glu1652, and Asp1685. Residues 1610 to 1752 (DASYGNQPYY…IKTFKLLTNK (143 aa)) form the RNase H Ty1/copia-type domain.

In terms of assembly, the capsid protein forms a homotrimer, from which the VLPs are assembled. The protease is a homodimer, whose active site consists of two apposed aspartic acid residues. Initially, virus-like particles (VLPs) are composed of the structural unprocessed proteins Gag and Gag-Pol, and also contain the host initiator methionine tRNA (tRNA(i)-Met) which serves as a primer for minus-strand DNA synthesis, and a dimer of genomic Ty RNA. Processing of the polyproteins occurs within the particle and proceeds by an ordered pathway, called maturation. First, the protease (PR) is released by autocatalytic cleavage of the Gag-Pol polyprotein yielding capsid protein p45 and a Pol-p154 precursor protein. This cleavage is a prerequisite for subsequent processing of Pol-p154 at the remaining sites to release the mature structural and catalytic proteins. Maturation takes place prior to the RT reaction and is required to produce transposition-competent VLPs.

Its subcellular location is the cytoplasm. The protein localises to the nucleus. The enzyme catalyses DNA(n) + a 2'-deoxyribonucleoside 5'-triphosphate = DNA(n+1) + diphosphate. The catalysed reaction is Endonucleolytic cleavage to 5'-phosphomonoester.. Capsid protein (CA) is the structural component of the virus-like particle (VLP), forming the shell that encapsulates the retrotransposons dimeric RNA genome. The particles are assembled from trimer-clustered units and there are holes in the capsid shells that allow for the diffusion of macromolecules. CA also has nucleocapsid-like chaperone activity, promoting primer tRNA(i)-Met annealing to the multipartite primer-binding site (PBS), dimerization of Ty1 RNA and initiation of reverse transcription. Functionally, the aspartyl protease (PR) mediates the proteolytic cleavages of the Gag and Gag-Pol polyproteins after assembly of the VLP. In terms of biological role, reverse transcriptase/ribonuclease H (RT) is a multifunctional enzyme that catalyzes the conversion of the retro-elements RNA genome into dsDNA within the VLP. The enzyme displays a DNA polymerase activity that can copy either DNA or RNA templates, and a ribonuclease H (RNase H) activity that cleaves the RNA strand of RNA-DNA heteroduplexes during plus-strand synthesis and hydrolyzes RNA primers. The conversion leads to a linear dsDNA copy of the retrotransposon that includes long terminal repeats (LTRs) at both ends. Its function is as follows. Integrase (IN) targets the VLP to the nucleus, where a subparticle preintegration complex (PIC) containing at least integrase and the newly synthesized dsDNA copy of the retrotransposon must transit the nuclear membrane. Once in the nucleus, integrase performs the integration of the dsDNA into the host genome. This Saccharomyces cerevisiae (strain ATCC 204508 / S288c) (Baker's yeast) protein is Transposon Ty1-OL Gag-Pol polyprotein (TY1B-OL).